We begin with the raw amino-acid sequence, 122 residues long: Large ribosomal subunit protein uL14c (122 aa).

The protein belongs to the universal ribosomal protein uL14 family. Part of the 50S ribosomal subunit.

The protein localises to the plastid. It is found in the chloroplast. Its function is as follows. Binds to 23S rRNA. The polypeptide is Large ribosomal subunit protein uL14c (Cryptomeria japonica (Japanese cedar)).